The following is a 210-amino-acid chain: Somatotropin-1 (210 aa).

A signal peptide spans 1–22 (MGQVFLLMPVLLASCFLSQGAA). H38 serves as a coordination point for Zn(2+). C71 and C183 form a disulfide bridge. Position 192 (E192) interacts with Zn(2+). C200 and C208 form a disulfide bridge.

Belongs to the somatotropin/prolactin family.

Its subcellular location is the secreted. Functionally, growth hormone plays an important role in growth control and is involved in the regulation of several anabolic processes. Implicated as an osmoregulatory substance important for seawater adaptation. The sequence is that of Somatotropin-1 (gh1) from Oncorhynchus nerka (Sockeye salmon).